A 354-amino-acid chain; its full sequence is Photosystem II protein D1 3 (354 aa).

Helical transmembrane passes span 29-46 (YIGW…TATT), 118-133 (HFLI…EWEL), and 142-156 (WIAV…AATA). H118 serves as a coordination point for chlorophyll a. Residue Y126 participates in pheophytin a binding. Residues D170 and E189 each coordinate [CaMn4O5] cluster. Residues 197-218 (FHQLGVAGVFGGALFSAMHGSL) traverse the membrane as a helical segment. A chlorophyll a-binding site is contributed by H198. Residues H215 and 264–265 (SF) each bind a quinone. H215 serves as a coordination point for Fe cation. Fe cation is bound at residue H272. Residues 274–288 (FLAAWPVIGIWFTAL) form a helical membrane-spanning segment. [CaMn4O5] cluster-binding residues include H332, E333, D342, and A344. Residues 345 to 354 (AVEVAPAVRG) constitute a propeptide that is removed on maturation.

It belongs to the reaction center PufL/M/PsbA/D family. PSII is composed of 1 copy each of membrane proteins PsbA, PsbB, PsbC, PsbD, PsbE, PsbF, PsbH, PsbI, PsbJ, PsbK, PsbL, PsbM, PsbT, PsbX, PsbY, PsbZ, Psb30/Ycf12, peripheral proteins PsbO, CyanoQ (PsbQ), PsbU, PsbV and a large number of cofactors. It forms dimeric complexes. It depends on The D1/D2 heterodimer binds P680, chlorophylls that are the primary electron donor of PSII, and subsequent electron acceptors. It shares a non-heme iron and each subunit binds pheophytin, quinone, additional chlorophylls, carotenoids and lipids. D1 provides most of the ligands for the Mn4-Ca-O5 cluster of the oxygen-evolving complex (OEC). There is also a Cl(-1) ion associated with D1 and D2, which is required for oxygen evolution. The PSII complex binds additional chlorophylls, carotenoids and specific lipids. as a cofactor. In terms of processing, tyr-161 forms a radical intermediate that is referred to as redox-active TyrZ, YZ or Y-Z. Post-translationally, C-terminally processed by CtpA; processing is essential to allow assembly of the oxygen-evolving complex and thus photosynthetic growth.

It is found in the cellular thylakoid membrane. The enzyme catalyses 2 a plastoquinone + 4 hnu + 2 H2O = 2 a plastoquinol + O2. Its function is as follows. Photosystem II (PSII) is a light-driven water:plastoquinone oxidoreductase that uses light energy to abstract electrons from H(2)O, generating O(2) and a proton gradient subsequently used for ATP formation. It consists of a core antenna complex that captures photons, and an electron transfer chain that converts photonic excitation into a charge separation. The D1/D2 (PsbA/PsbD) reaction center heterodimer binds P680, the primary electron donor of PSII as well as several subsequent electron acceptors. This is Photosystem II protein D1 3 from Synechococcus sp. (strain JA-3-3Ab) (Cyanobacteria bacterium Yellowstone A-Prime).